The chain runs to 263 residues: Granzyme K (263 aa).

Positions 1-21 (MRFSSWALVSLVAGVYMSSEC) are cleaved as a signal peptide. A propeptide spans 22–25 (FHTE) (activation peptide). Residues 26 to 258 (IIGGREVQPH…YQTWIKSKLA (233 aa)) form the Peptidase S1 domain. Cysteines 51 and 67 form a disulfide. Residues His-66 and Asp-115 each act as charge relay system in the active site. Disulfide bonds link Cys-148-Cys-219, Cys-180-Cys-198, and Cys-209-Cys-233. Ser-213 functions as the Charge relay system in the catalytic mechanism.

It belongs to the peptidase S1 family. Granzyme subfamily.

Its subcellular location is the cytoplasmic granule. This Mus musculus (Mouse) protein is Granzyme K (Gzmk).